The primary structure comprises 125 residues: Small ribosomal subunit protein uS13 (125 aa).

The protein belongs to the universal ribosomal protein uS13 family. Part of the 30S ribosomal subunit. Forms a loose heterodimer with protein S19. Forms two bridges to the 50S subunit in the 70S ribosome.

In terms of biological role, located at the top of the head of the 30S subunit, it contacts several helices of the 16S rRNA. In the 70S ribosome it contacts the 23S rRNA (bridge B1a) and protein L5 of the 50S subunit (bridge B1b), connecting the 2 subunits; these bridges are implicated in subunit movement. Contacts the tRNAs in the A and P-sites. The polypeptide is Small ribosomal subunit protein uS13 (Rickettsia felis (strain ATCC VR-1525 / URRWXCal2) (Rickettsia azadi)).